The primary structure comprises 418 residues: Ankyrin repeat domain-containing protein 61 (418 aa).

8 ANK repeats span residues 27-57 (ALHSKLYEAIMREDCTTIEVLLRNHPVNQPI), 75-104 (ESIIPIHLAAKYHKAQSLLCLLRHGADPEV), 132-161 (NRTHRILTDIQNSSITCLRILCAHGAQVNT), 167-196 (NKRSPLHLAIAYGCYPVLSILTQNGADVNA), 200-229 (ASMTPLHMAANMLNKEMMETLIAYGANVNC), 234-273 (TGNTPLKLAVCTASSKAGRLLGAGVSCIRLLLTHGAKVNA), 277-306 (KGQTAIHEACFGGREAIINLLLEFEANVNI), and 310-343 (NGESPIYMYLQRSCNVRDTALLARLLYHTYPLRM).

The protein is Ankyrin repeat domain-containing protein 61 (ANKRD61) of Homo sapiens (Human).